The following is a 455-amino-acid chain: UDP-N-acetylmuramate--L-alanine ligase (455 aa).

Residue 109 to 115 (GTHGKTT) participates in ATP binding.

The protein belongs to the MurCDEF family.

The protein resides in the cytoplasm. The catalysed reaction is UDP-N-acetyl-alpha-D-muramate + L-alanine + ATP = UDP-N-acetyl-alpha-D-muramoyl-L-alanine + ADP + phosphate + H(+). The protein operates within cell wall biogenesis; peptidoglycan biosynthesis. Functionally, cell wall formation. The polypeptide is UDP-N-acetylmuramate--L-alanine ligase (Caldicellulosiruptor saccharolyticus (strain ATCC 43494 / DSM 8903 / Tp8T 6331)).